We begin with the raw amino-acid sequence, 177 residues long: Meiotically up-regulated gene 121 protein (177 aa).

An N-terminal signal peptide occupies residues 1–23 (MKGFVVISRFILTLFILITPGLA). Residue asparagine 121 is glycosylated (N-linked (GlcNAc...) asparagine).

It is found in the endoplasmic reticulum. The protein resides in the golgi apparatus. Has a role in meiosis. In Schizosaccharomyces pombe (strain 972 / ATCC 24843) (Fission yeast), this protein is Meiotically up-regulated gene 121 protein (mug121).